A 350-amino-acid polypeptide reads, in one-letter code: Probable transposase-like protein At4g04430 (350 aa).

2 disordered regions span residues 1–57 and 307–328; these read MPSD…PSVN and QIGQANPNEPPVSAAPEPQVAN. Over residues 30 to 43 the composition is skewed to low complexity; it reads SGVQGSGSRSGSTV.

The protein belongs to the transposase 24 family.

This Arabidopsis thaliana (Mouse-ear cress) protein is Probable transposase-like protein At4g04430.